Here is a 126-residue protein sequence, read N- to C-terminus: Anti-adapter protein IraD (126 aa).

This sequence belongs to the GpW/Gp25 family. IraD subfamily. Interacts with RssB.

It localises to the cytoplasm. Functionally, inhibits RpoS proteolysis by regulating RssB activity, thereby increasing the stability of the sigma stress factor RpoS during oxidative stress. Its effect on RpoS stability is due to its interaction with RssB, which probably blocks the interaction of RssB with RpoS, and the consequent delivery of the RssB-RpoS complex to the ClpXP protein degradation pathway. In Salmonella paratyphi A (strain ATCC 9150 / SARB42), this protein is Anti-adapter protein IraD.